A 314-amino-acid polypeptide reads, in one-letter code: Pathogenicity locus probable regulatory protein HrpR (314 aa).

The region spanning 11-239 (TRWNVTALSA…LKSAANAICP (229 aa)) is the Sigma-54 factor interaction domain. ATP-binding positions include 39 to 46 (GETGTGKD) and 101 to 110 (SNGGTLYLDE). The H-T-H motif DNA-binding region spans 281-300 (FDAVLEELELPRRTLYHRMK).

Functionally, member of the two-component regulatory system HrpR/HrpS that regulates the activation of the sigma factor hrpL which itself induces the expression of hprD as well as other hrp loci which are involved in plant pathogenicity, hrmA and avr genes. Probably interacts with sigma-54. This is Pathogenicity locus probable regulatory protein HrpR (hrpR) from Pseudomonas syringae pv. syringae.